Reading from the N-terminus, the 490-residue chain is Glutamyl-tRNA(Gln) amidotransferase subunit A (490 aa).

Residues K78 and S158 each act as charge relay system in the active site. The interval 131–159 (SNETSRFGPPINPWRRKGDNAGLTPGGSS) is disordered. S182 functions as the Acyl-ester intermediate in the catalytic mechanism.

Belongs to the amidase family. GatA subfamily. Heterotrimer of A, B and C subunits.

It carries out the reaction L-glutamyl-tRNA(Gln) + L-glutamine + ATP + H2O = L-glutaminyl-tRNA(Gln) + L-glutamate + ADP + phosphate + H(+). Allows the formation of correctly charged Gln-tRNA(Gln) through the transamidation of misacylated Glu-tRNA(Gln) in organisms which lack glutaminyl-tRNA synthetase. The reaction takes place in the presence of glutamine and ATP through an activated gamma-phospho-Glu-tRNA(Gln). In Hyphomonas neptunium (strain ATCC 15444), this protein is Glutamyl-tRNA(Gln) amidotransferase subunit A.